Reading from the N-terminus, the 228-residue chain is Cytidylate kinase (228 aa).

17–25 (GPTASGKGT) contacts ATP.

The protein belongs to the cytidylate kinase family. Type 1 subfamily.

It localises to the cytoplasm. It catalyses the reaction CMP + ATP = CDP + ADP. The enzyme catalyses dCMP + ATP = dCDP + ADP. This chain is Cytidylate kinase, found in Burkholderia ambifaria (strain ATCC BAA-244 / DSM 16087 / CCUG 44356 / LMG 19182 / AMMD) (Burkholderia cepacia (strain AMMD)).